Reading from the N-terminus, the 274-residue chain is Kit ligand (274 aa).

Positions 1–25 (MKKTQTWIITCIYLQLLLFNPLVKT) are cleaved as a signal peptide. The Extracellular portion of the chain corresponds to 26–215 (KGICENRVTD…SNFTGDSNLQ (190 aa)). Cystine bridges form between C29/C114 and C68/C164. 5 N-linked (GlcNAc...) asparagine glycosylation sites follow: N90, N97, N145, N196, and N207. The chain crosses the membrane as a helical span at residues 216-238 (WAAMALPAFFSLVIGFAFGALYW). The Cytoplasmic segment spans residues 239–274 (KKKQPNLTRAVENIQINEEDNEISMLQEKEREFQEV).

The protein belongs to the SCF family. Homodimer, non-covalently linked. In terms of processing, a soluble form is produced by proteolytic processing of the extracellular domain.

It localises to the cytoplasm. The protein resides in the cytoskeleton. It is found in the cell membrane. Its subcellular location is the cell projection. The protein localises to the lamellipodium. It localises to the filopodium. The protein resides in the secreted. Stimulates the proliferation of mast cells. Able to augment the proliferation of both myeloid and lymphoid hematopoietic progenitors in bone marrow culture. Also mediates cell-cell adhesion. Acts synergistically with other cytokines, probably interleukins. This is Kit ligand (KITLG) from Equus caballus (Horse).